The following is a 413-amino-acid chain: MNFLPFLIAKRLYHRNNKNHAVLLVSILSKIGISISIFTLILSFSALNGFQILIKKNILSSLPHGIIELTNTSAFTWKDITKKLESLPEVIYSEPYVLMNSVLLKNDKMRFINIKSFKNIKYIKKYFSFQKKLYNFSKLKKIYNNEIIISSDLAKYFSLKEGDCINLIILNKKISFDKTQIQSFSFKVKSIFHSNGISNSNIGLIPFIFFQKFFNIKNNINKIELYMSDPFQADKIILKIAKKIKTPLFFYNWMYSYKYIYHDIKIIKTIIYVTLFLIIIISCFSVISICLTSISKKTKDIAILRSIGANNILIQLIFFYYGMRFIIIGNLIGLLTGIITVLNFKKIMFFLEKHFEENWFLKNVYYKNFLLLQINFFDLIIIFISTLTIGIVANWYPIYYASKINPNKILKEY.

Helical transmembrane passes span V22–L42, I270–C290, I312–I332, and L379–Y399.

This sequence belongs to the ABC-4 integral membrane protein family. LolC/E subfamily.

The protein localises to the cell membrane. This is an uncharacterized protein from Buchnera aphidicola subsp. Schizaphis graminum (strain Sg).